The following is a 288-amino-acid chain: Bis(5'-nucleosyl)-tetraphosphatase, symmetrical (288 aa).

It belongs to the Ap4A hydrolase family.

The catalysed reaction is P(1),P(4)-bis(5'-adenosyl) tetraphosphate + H2O = 2 ADP + 2 H(+). In terms of biological role, hydrolyzes diadenosine 5',5'''-P1,P4-tetraphosphate to yield ADP. This chain is Bis(5'-nucleosyl)-tetraphosphatase, symmetrical, found in Baumannia cicadellinicola subsp. Homalodisca coagulata.